The sequence spans 280 residues: DegV domain-containing protein Mb2440c (280 aa).

Residues 3–274 (VVVVTDTSCR…AGAVGVCVDV (272 aa)) form the DegV domain. Ser89 is a binding site for hexadecanoate.

May bind long-chain fatty acids, such as palmitate, and may play a role in lipid transport or fatty acid metabolism. In Mycobacterium bovis (strain ATCC BAA-935 / AF2122/97), this protein is DegV domain-containing protein Mb2440c.